We begin with the raw amino-acid sequence, 255 residues long: Pyridoxine 5'-phosphate synthase (255 aa).

Asparagine 8 and arginine 19 together coordinate 3-amino-2-oxopropyl phosphate. The active-site Proton acceptor is the histidine 44. 2 residues coordinate 1-deoxy-D-xylulose 5-phosphate: arginine 46 and histidine 51. Glutamate 74 functions as the Proton acceptor in the catalytic mechanism. Residue threonine 111 participates in 1-deoxy-D-xylulose 5-phosphate binding. The Proton donor role is filled by histidine 202. Residues aspartate 203 and 225-226 (GH) contribute to the 3-amino-2-oxopropyl phosphate site.

The protein belongs to the PNP synthase family. As to quaternary structure, homooctamer; tetramer of dimers.

It localises to the cytoplasm. The enzyme catalyses 3-amino-2-oxopropyl phosphate + 1-deoxy-D-xylulose 5-phosphate = pyridoxine 5'-phosphate + phosphate + 2 H2O + H(+). Its pathway is cofactor biosynthesis; pyridoxine 5'-phosphate biosynthesis; pyridoxine 5'-phosphate from D-erythrose 4-phosphate: step 5/5. Functionally, catalyzes the complicated ring closure reaction between the two acyclic compounds 1-deoxy-D-xylulose-5-phosphate (DXP) and 3-amino-2-oxopropyl phosphate (1-amino-acetone-3-phosphate or AAP) to form pyridoxine 5'-phosphate (PNP) and inorganic phosphate. The protein is Pyridoxine 5'-phosphate synthase of Xanthomonas axonopodis pv. citri (strain 306).